We begin with the raw amino-acid sequence, 545 residues long: MLTQLKTYPKLLKHYEEIKEMHMRDWFSKDKERASRYFVQFESLSLDYSKNRLNDTTLKLLFELARDCSLKEKIEAMFKGEKINTTEKRAVLHTALRSLNDTEILLDNMEVLKSVRSVLKRMRAFSDSVRSGKRLGYTNQVITDIVNIGIGGSDLGALMVCTALKRYAHPRLKMHFVSNVDGTQILDVLEKLNPASTLFIVASKTFSTQETLTNALTARKWFVERSGDEKHIAKHFVAVSTNKEAVQQFGIDEHNMFEFWDFVGGRYSLWSAIGLSIMIYLGKKNFNALLKGAYLMDEHFKNAPFESNLPVLMGLIGVWYINFFKSKSHLIAPYDQYLRHFPKFIQQLDMESNGKRISKKGETIPYDTCPVVWGDMGINAQHAFFQLLHQGTHLIPIDFIASLDKKPNAKGHHEILFSNVLAQAQAFMKGKSYEEAFGELLSKGLEKDEAKDLAHHRVFFGNRPSNILLLEKISPSNMGALVALYEHKVFVQGVIWDINSFDQWGVELGKELAVPILQELEGHKSNAFFDSSTKHLIELYKNYNQ.

The active-site Proton donor is the Glu351. Active-site residues include His382 and Lys510.

Belongs to the GPI family.

Its subcellular location is the cytoplasm. The enzyme catalyses alpha-D-glucose 6-phosphate = beta-D-fructose 6-phosphate. It participates in carbohydrate biosynthesis; gluconeogenesis. Its pathway is carbohydrate degradation; glycolysis; D-glyceraldehyde 3-phosphate and glycerone phosphate from D-glucose: step 2/4. In terms of biological role, catalyzes the reversible isomerization of glucose-6-phosphate to fructose-6-phosphate. This is Glucose-6-phosphate isomerase from Helicobacter acinonychis (strain Sheeba).